A 200-amino-acid chain; its full sequence is Small ribosomal subunit protein uS4 (200 aa).

Positions 92–155 (SRLDAVVYSL…QKLNVIVESV (64 aa)) constitute an S4 RNA-binding domain.

Belongs to the universal ribosomal protein uS4 family. As to quaternary structure, part of the 30S ribosomal subunit. Contacts protein S5. The interaction surface between S4 and S5 is involved in control of translational fidelity.

Functionally, one of the primary rRNA binding proteins, it binds directly to 16S rRNA where it nucleates assembly of the body of the 30S subunit. In terms of biological role, with S5 and S12 plays an important role in translational accuracy. The chain is Small ribosomal subunit protein uS4 from Staphylococcus aureus (strain MRSA252).